The chain runs to 256 residues: tRNA-cytidine(32) 2-sulfurtransferase 1 (256 aa).

Positions 38 to 43 (SGGKDS) match the PP-loop motif motif. [4Fe-4S] cluster is bound by residues Cys-113, Cys-116, and Cys-204.

Belongs to the TtcA family. In terms of assembly, homodimer. Requires Mg(2+) as cofactor. [4Fe-4S] cluster is required as a cofactor.

Its subcellular location is the cytoplasm. It carries out the reaction cytidine(32) in tRNA + S-sulfanyl-L-cysteinyl-[cysteine desulfurase] + AH2 + ATP = 2-thiocytidine(32) in tRNA + L-cysteinyl-[cysteine desulfurase] + A + AMP + diphosphate + H(+). It participates in tRNA modification. Functionally, catalyzes the ATP-dependent 2-thiolation of cytidine in position 32 of tRNA, to form 2-thiocytidine (s(2)C32). The sulfur atoms are provided by the cysteine/cysteine desulfurase (IscS) system. This chain is tRNA-cytidine(32) 2-sulfurtransferase 1, found in Francisella philomiragia subsp. philomiragia (strain ATCC 25017 / CCUG 19701 / FSC 153 / O#319-036).